The following is a 722-amino-acid chain: Solute carrier organic anion transporter family member 4C1 (722 aa).

A disordered region spans residues 1-81 (MQGSKGIENP…PGSQLSELEE (81 aa)). At 1–101 (MQGSKGIENP…QCLQRCNTPQ (101 aa)) the chain is on the cytoplasmic side. Phosphoserine occurs at positions 15 and 16. Phosphothreonine is present on T19. S24, S26, and S28 each carry phosphoserine. Polar residues predominate over residues 25–46 (ASPSQVEVSAVASRNQNGGSQP). The chain crosses the membrane as a helical span at residues 102–122 (GFLLHYCLLALTQGIVVNGLV). Over 123-141 (NISISTIEKRYEMKSSLTG) the chain is Extracellular. A helical transmembrane segment spans residues 142–162 (LISSSYDISFCVLSLFVSFFG). Topologically, residues 163–168 (ERGHKP) are cytoplasmic. A helical membrane pass occupies residues 169 to 193 (RWLAFASFMIGLGALVFSLPHFFSG). The Extracellular portion of the chain corresponds to 194-218 (RYELGSIFEDTCLTRNSTRCSSSTS). The chain crosses the membrane as a helical span at residues 219 to 249 (LLSNYFYVFVLGQLLLGTGGTPLYTLGTAFI). Residues 250–269 (DDSVPTHKSSLYIGIGYSMS) lie on the Cytoplasmic side of the membrane. The chain crosses the membrane as a helical span at residues 270-290 (ILGPAIGYVLGGQLLTMYIDI). The Extracellular portion of the chain corresponds to 291–306 (AMGQSSDLTEDDPRWL). Residues 307–331 (GAWWIGFLLAWLFAWSLIMPFSCFP) form a helical membrane-spanning segment. Residues 332 to 376 (KHLPGTAKIQAGKTSQTHQNNSTSFQHTDENFGKSIKDFPTAVKN) are Cytoplasmic-facing. A helical transmembrane segment spans residues 377 to 398 (LMRNTVFICLVLSTTSEALITT). The Extracellular segment spans residues 399-418 (GFATFLPKFIENQFGLTSSF). The chain crosses the membrane as a helical span at residues 419–442 (AATLGGAVLIPGAALGQILGGVLV). The Cytoplasmic segment spans residues 443–446 (SKFK). A helical membrane pass occupies residues 447–470 (MKCKNTMKFALCTSGVALVLSFVF). At 471-578 (IYAKCENEPF…RTRCSNLPIF (108 aa)) the chain is on the extracellular side. A Kazal-like domain is found at 494-549 (GNLTAPCNANCNCLRSYYYPLCGSDGIQYFSPCFAGCLNSVSNRKPKVYYNCSCIE). 3 cysteine pairs are disulfide-bonded: C500–C530, C506–C526, and C515–C547. Residues 579–601 (LGIFFITVIFTFMAGTPITVSIL) form a helical membrane-spanning segment. Over 602-610 (RCVNHRHRS) the chain is Cytoplasmic. Residues 611 to 636 (LALGVQFMLLRLLGTIPGPIIFGVII) traverse the membrane as a helical segment. Residues 637 to 670 (DSTCVLWDVNECGIKGACWIYDNIKMAHMLVAIS) are Extracellular-facing. Residues 671–688 (VTCKVITIFFNGLAIVLY) form a helical membrane-spanning segment. Residues 689-722 (KPPPPGTEVSFQSQNVIVSTISVEEDLDKAENEG) are Cytoplasmic-facing.

Belongs to the organo anion transporter (TC 2.A.60) family. As to expression, strongly expressed in initial segment of epididymis and seminal vesicles.

It localises to the basolateral cell membrane. It catalyses the reaction estrone 3-sulfate(out) = estrone 3-sulfate(in). It carries out the reaction L-thyroxine(out) = L-thyroxine(in). The catalysed reaction is 3,3',5-triiodo-L-thyronine(out) = 3,3',5-triiodo-L-thyronine(in). The enzyme catalyses chenodeoxycholate(out) = chenodeoxycholate(in). It catalyses the reaction glycocholate(out) = glycocholate(in). It carries out the reaction L-homoarginine(in) = L-homoarginine(out). The catalysed reaction is L-arginine(in) = L-arginine(out). The enzyme catalyses N(omega),N(omega)-dimethyl-L-arginine(out) = N(omega),N(omega)-dimethyl-L-arginine(in). Its function is as follows. Mediates the transport of organic anions such as steroids (estrone 3-sulfate, chenodeoxycholate, glycocholate) and thyroid hormones (3,3',5-triiodo-L-thyronine (T3), L-thyroxine (T4)), in the kidney. Capable of transporting cAMP and pharmacological substances such as digoxin, ouabain and methotrexate. Transport is independent of sodium, chloride ion, and ATP. Transport activity is stimulated by an acidic extracellular environment due to increased substrate affinity to the transporter. The driving force for this transport activity is currently not known. The role of hydrogencarbonate (HCO3(-), bicarbonate) as the probable counteranion that exchanges for organic anions is still not well defined. Functions as an uptake transporter at the apical membrane, suggesting a role in renal reabsorption. Involved in the renal secretion of the uremic toxin ADMA (N(omega),N(omega)-dimethyl-L-arginine or asymmetrical dimethylarginine), which is associated to cardiovascular events and mortality, and the structurally related amino acids L-arginine and L-homoarginine (a cardioprotective biomarker). Can act bidirectionally, suggesting a dual protective role of this transport protein; exporting L-homoarginine after being synthesized in proximal tubule cells, and mediating uptake of ADMA from the blood into proximal tubule cells where it is degraded by the enzyme dimethylarginine dimethylaminohydrolase 1 (DDAH1). May be involved in sperm maturation by enabling directed movement of organic anions and compounds within or between cells. This ion-transporting process is important to maintain the strict epididymal homeostasis necessary for sperm maturation. May have a role in secretory functions since seminal vesicle epithelial cells are assumed to secrete proteins involved in decapacitation by modifying surface proteins to facilitate the acquisition of the ability to fertilize the egg. The sequence is that of Solute carrier organic anion transporter family member 4C1 from Mus musculus (Mouse).